The chain runs to 50 residues: Protein hunchback (50 aa).

3 C2H2-type zinc fingers span residues 1–5 (HILKH), 11–33 (IRCP…MKSH), and 39–50 (YRCLDCNYATKY).

It belongs to the hunchback C2H2-type zinc-finger protein family.

It is found in the nucleus. Functionally, gap class segmentation protein that controls development of head structures. This is Protein hunchback (hb) from Bradysia coprophila (Dark-winged fungus gnat).